Reading from the N-terminus, the 156-residue chain is Bacterial ferritin (156 aa).

In terms of domain architecture, Ferritin-like diiron spans M1–G146. The Fe cation site is built by E18, E51, H54, E94, E128, and H131.

The protein belongs to the bacterioferritin family. In terms of assembly, the bacterioferritin (BFR) complex is formed of 24 subunits (BfrA and BfrB) of unknown stoichiometry. The BFR is arranged as 12 dimers that are packed together to form an approximately spherical molecule with a central cavity, in which large amounts of iron can be deposited.

Its subcellular location is the cytoplasm. It catalyses the reaction 4 Fe(2+) + O2 + 4 H(+) = 4 Fe(3+) + 2 H2O. It carries out the reaction Fe(2+)(in) = Fe(2+)(out). Part of the iron-storage bacterioferritin (BFR) complex which stores about 50% of intracellular iron. Iron-storage protein, whose ferroxidase center binds Fe(2+), oxidizes it using dioxygen to Fe(3+), and participates in the subsequent Fe(3+) oxide mineral core formation within the central cavity of the BFR protein shell. BFR rapidly binds iron in labeling experiments in vivo during iron-limiting conditions. The chain is Bacterial ferritin from Synechocystis sp. (strain ATCC 27184 / PCC 6803 / Kazusa).